Consider the following 155-residue polypeptide: UPF0260 protein NGR_c07710 (155 aa).

The protein belongs to the UPF0260 family.

This Sinorhizobium fredii (strain NBRC 101917 / NGR234) protein is UPF0260 protein NGR_c07710.